Here is a 376-residue protein sequence, read N- to C-terminus: Chaperone protein DnaJ (376 aa).

Residues 5–70 (DYYEVLGVGR…DKKAAYDQFG (66 aa)) enclose the J domain. Residues 132–210 (GLTKELRIPT…CHGDGRVEKS (79 aa)) form a CR-type zinc finger. Residues C145, C148, C162, C165, C184, C187, C198, and C201 each coordinate Zn(2+). 4 CXXCXGXG motif repeats span residues 145–152 (CDLCDGSG), 162–169 (CTTCHGQG), 184–191 (CPTCHGRG), and 198–205 (CTKCHGDG).

Belongs to the DnaJ family. Homodimer. Requires Zn(2+) as cofactor.

Its subcellular location is the cytoplasm. Its function is as follows. Participates actively in the response to hyperosmotic and heat shock by preventing the aggregation of stress-denatured proteins and by disaggregating proteins, also in an autonomous, DnaK-independent fashion. Unfolded proteins bind initially to DnaJ; upon interaction with the DnaJ-bound protein, DnaK hydrolyzes its bound ATP, resulting in the formation of a stable complex. GrpE releases ADP from DnaK; ATP binding to DnaK triggers the release of the substrate protein, thus completing the reaction cycle. Several rounds of ATP-dependent interactions between DnaJ, DnaK and GrpE are required for fully efficient folding. Also involved, together with DnaK and GrpE, in the DNA replication of plasmids through activation of initiation proteins. This chain is Chaperone protein DnaJ, found in Shewanella putrefaciens (strain CN-32 / ATCC BAA-453).